Here is a 132-residue protein sequence, read N- to C-terminus: MTMTDPLGDMLTRIRNGASRRKSSVSTPASKLRARVLDVLQSEGYIRGYSVVDFGNGKSELNIELKYYEGASVIREIGRVSKPGRRVYVSVKSIPQVANGLGITILSTPKGVMADHQAREQNVGGEVLCSVF.

Belongs to the universal ribosomal protein uS8 family. In terms of assembly, part of the 30S ribosomal subunit. Contacts proteins S5 and S12.

In terms of biological role, one of the primary rRNA binding proteins, it binds directly to 16S rRNA central domain where it helps coordinate assembly of the platform of the 30S subunit. The chain is Small ribosomal subunit protein uS8 from Rhizobium etli (strain CIAT 652).